The following is a 659-amino-acid chain: Delta(6)-protoilludene synthase (659 aa).

4 residues coordinate Mg(2+): Asp91, Asn227, Ser231, and Glu235. A DDXXD motif motif is present at residues 91-95 (DEHTD). (2E,6E)-farnesyl diphosphate is bound by residues Arg316 and Tyr317. Residues 528–586 (PQFSKTSGAPNGAHTPTTTNGSIKSNGFVSGDTNGHANGNGHVQTRSSTPSSSSSSTSS) form a disordered region. The segment covering 530 to 573 (FSKTSGAPNGAHTPTTTNGSIKSNGFVSGDTNGHANGNGHVQTR) has biased composition (polar residues). Over residues 574–586 (SSTPSSSSSSTSS) the composition is skewed to low complexity.

It belongs to the terpene synthase family. The cofactor is Mg(2+).

The enzyme catalyses (2E,6E)-farnesyl diphosphate = Delta(6)-protoilludene + diphosphate. Functionally, terpene cyclase that catalyzes the cyclization of farnesyl diphosphate (FPP) to delta(6)-protoilludene. This is Delta(6)-protoilludene synthase from Cyclocybe aegerita (Black poplar mushroom).